The chain runs to 282 residues: MEMO1 family protein Cmaq_1590 (282 aa).

It belongs to the MEMO1 family.

In Caldivirga maquilingensis (strain ATCC 700844 / DSM 13496 / JCM 10307 / IC-167), this protein is MEMO1 family protein Cmaq_1590.